A 131-amino-acid chain; its full sequence is Small ribosomal subunit protein uS8 (131 aa).

The protein belongs to the universal ribosomal protein uS8 family. In terms of assembly, part of the 30S ribosomal subunit. Contacts proteins S5 and S12.

One of the primary rRNA binding proteins, it binds directly to 16S rRNA central domain where it helps coordinate assembly of the platform of the 30S subunit. The sequence is that of Small ribosomal subunit protein uS8 from Sulfurimonas denitrificans (strain ATCC 33889 / DSM 1251) (Thiomicrospira denitrificans (strain ATCC 33889 / DSM 1251)).